The primary structure comprises 329 residues: Transaldolase (329 aa).

The active-site Schiff-base intermediate with substrate is the lysine 136.

This sequence belongs to the transaldolase family. Type 1 subfamily. In terms of assembly, homodimer.

The protein resides in the cytoplasm. The catalysed reaction is D-sedoheptulose 7-phosphate + D-glyceraldehyde 3-phosphate = D-erythrose 4-phosphate + beta-D-fructose 6-phosphate. The protein operates within carbohydrate degradation; pentose phosphate pathway; D-glyceraldehyde 3-phosphate and beta-D-fructose 6-phosphate from D-ribose 5-phosphate and D-xylulose 5-phosphate (non-oxidative stage): step 2/3. Functionally, transaldolase is important for the balance of metabolites in the pentose-phosphate pathway. The protein is Transaldolase of Methylococcus capsulatus (strain ATCC 33009 / NCIMB 11132 / Bath).